Here is a 212-residue protein sequence, read N- to C-terminus: Small ribosomal subunit protein uS4c (212 aa).

An S4 RNA-binding domain is found at Met-89–Leu-152.

Belongs to the universal ribosomal protein uS4 family. In terms of assembly, part of the 30S ribosomal subunit. Contacts protein S5. The interaction surface between S4 and S5 is involved in control of translational fidelity.

Its subcellular location is the plastid. It is found in the chloroplast. Functionally, one of the primary rRNA binding proteins, it binds directly to 16S rRNA where it nucleates assembly of the body of the 30S subunit. Its function is as follows. With S5 and S12 plays an important role in translational accuracy. The sequence is that of Small ribosomal subunit protein uS4c (rps4) from Staurastrum punctulatum (Green alga).